The primary structure comprises 524 residues: MLVKVFSFFILMITMVVIGVSKEYCDDKHSCQNFLLELKTASSSLSEIRRRDLLIIVLKNSVRKIDMAMIGVMEDTKQHEEMENDKLCLKEDTNLFEEMMESAKDRMIRSVEELLGGEFPYLGSYENIHTWLSGVLTSYITCIDEIGDGAYKRRVEPQLQDLISKAKVALALFISISPRDNTELNSVVPNSPSWLSHVDKKDLYLNAEALKKIADVVVAKDGTGKYNTVNAAIAAAPQHSHKRFIIYIKTGIYDEIVAIENTKPNLTLIGDGQDSTIITGNLSASNVRRTFYTATFASNGKGFIGVDMCFRNTVGPAKGPAVALRVSGDMSVIYRCRVEGYQDALYPHIDRQFYRECFITGTVDFICGNAAAVFQFCQIVARQPNMGQSNFITAQSRETKDDKSGFSIQNCNITASSDLDTATVKTYLGRPWRIFSTVAVLQSFIGDLVDPAGWTPWEGETGLSTLHYREYQNRGPGAVTSRRVKWSGFKVMKDPKQATEFTVAKLLDGETWLKESRIPYKSGL.

An N-terminal signal peptide occupies residues 1–22 (MLVKVFSFFILMITMVVIGVSK). The segment at 23–172 (EYCDDKHSCQ…ISKAKVALAL (150 aa)) is pectinesterase inhibitor 42. A pectinesterase 42 region spans residues 215 to 510 (DVVVAKDGTG…FTVAKLLDGE (296 aa)). N-linked (GlcNAc...) asparagine glycosylation is found at Asn-265 and Asn-281. Thr-290 serves as a coordination point for substrate. Asp-343 functions as the Proton donor; for pectinesterase activity in the catalytic mechanism. Cys-357 and Cys-377 are oxidised to a cystine. The active-site Nucleophile; for pectinesterase activity is the Asp-364. N-linked (GlcNAc...) asparagine glycosylation is present at Asn-412. 2 residues coordinate substrate: Arg-430 and Trp-432.

This sequence in the N-terminal section; belongs to the PMEI family. It in the C-terminal section; belongs to the pectinesterase family. Expressed in siliques but not in flower buds.

The protein localises to the secreted. It localises to the cell wall. The catalysed reaction is [(1-&gt;4)-alpha-D-galacturonosyl methyl ester](n) + n H2O = [(1-&gt;4)-alpha-D-galacturonosyl](n) + n methanol + n H(+). It functions in the pathway glycan metabolism; pectin degradation; 2-dehydro-3-deoxy-D-gluconate from pectin: step 1/5. Functionally, acts in the modification of cell walls via demethylesterification of cell wall pectin. The sequence is that of Probable pectinesterase/pectinesterase inhibitor 42 (PME42) from Arabidopsis thaliana (Mouse-ear cress).